The chain runs to 497 residues: Putative aldehyde dehydrogenase AldA (497 aa).

213-219 (GKGSESG) lines the NAD(+) pocket. Active-site residues include Glu-257 and Cys-291.

It belongs to the aldehyde dehydrogenase family.

The catalysed reaction is an aldehyde + NAD(+) + H2O = a carboxylate + NADH + 2 H(+). In Staphylococcus haemolyticus (strain JCSC1435), this protein is Putative aldehyde dehydrogenase AldA (aldA).